Here is a 193-residue protein sequence, read N- to C-terminus: dCTP deaminase (193 aa).

DCTP contacts are provided by residues 110–115 (RSSLAR), D128, 136–138 (VLE), Y171, K178, and Q182. Catalysis depends on E138, which acts as the Proton donor/acceptor. Positions 169–193 (RPYNRREDAKYRNQQGAVASRIDKD) are disordered.

It belongs to the dCTP deaminase family. In terms of assembly, homotrimer.

It catalyses the reaction dCTP + H2O + H(+) = dUTP + NH4(+). It participates in pyrimidine metabolism; dUMP biosynthesis; dUMP from dCTP (dUTP route): step 1/2. Its function is as follows. Catalyzes the deamination of dCTP to dUTP. In Sodalis glossinidius (strain morsitans), this protein is dCTP deaminase.